The chain runs to 696 residues: MARLVAVCRDGEEEFPFERRQIPLYIDDTLTMVMEFPDNVLNLDGHQNNGAQLKQFIQRHSMLKQQDLSIAMVVTSREVLSALSQLVPCVGCRRSVERLFSQLVESGNPALEPLTVGPKGVLSLTRSCMTDAKKLYTLFYVHGSKLNDMIDAIPKSKKNKRCQLHSLDTHKPKPLGGCWMDVWELMSQECRDEVVLIDSSCLLETLETYLRKHRFCTDCKNKVLRAYNILIGELDCSKEKGYCAALYEGLRCCPHERHIHVCCETDFIAHLLGRAEPEFAGGRRERHAKTIDIAQEEVLTCLGIHLYERLHRIWQKLRAEEQTWQMLFYLGVDALRKSFEMTVEKVQGISRLEQLCEEFSEEERVRELKQEKKRQKRKNRRKNKCVCDTPASLHTADEKAVSREKETDFIENSCNACGSAEDGETCVEVMVTSENTSCTCPSSGNLLGSPKIKKGMSPHCNGSDCGYSSSMEGSETGSREGSDVACTEGICNHDEHGEDSCVHHCEDKEDDGDSCVECWANSEENNIKGKNKKKKKKSKMLKCDEHIQKLGSCITDPGNRETSGNTMHTVFHRDKTKDAHPESCCSTEKGGQPLPWFEHRKSVPQFTEPTEMSFGPDSGKGAKSLVELLDESECTSDEEIFISQDEIQSFMANNQSFYSNREQYRQHLKEKFNKYCRLNDHKRPVCSGWLTTAGAN.

Serine 360 and serine 602 each carry phosphoserine.

As to quaternary structure, interacts with isoform 1 of GGN. In terms of tissue distribution, testis-specific.

Its subcellular location is the cytoplasmic vesicle. Functionally, may be involved in spermatogenesis. The polypeptide is Gametogenetin-binding protein 2 (Ggnbp2) (Mus musculus (Mouse)).